An 87-amino-acid polypeptide reads, in one-letter code: Defensin-like protein 223 (87 aa).

The signal sequence occupies residues 1 to 34 (MKSTIFVLTLLIFVSLYFNIIVYVSFSFIGTSEI). Intrachain disulfides connect C55-C72, C58-C77, and C62-C79.

The protein belongs to the DEFL family.

Its subcellular location is the secreted. This Arabidopsis thaliana (Mouse-ear cress) protein is Defensin-like protein 223.